Here is a 341-residue protein sequence, read N- to C-terminus: Malate dehydrogenase, mitochondrial (341 aa).

NAD(+) is bound by residues 35–41 (GAGGGIG) and D61. R109 and R115 together coordinate substrate. N122 provides a ligand contact to NAD(+). Substrate is bound by residues N147 and R181. The Proton acceptor role is filled by H205. M254 is a binding site for NAD(+).

This sequence belongs to the LDH/MDH superfamily. MDH type 1 family. In terms of assembly, homodimer.

It localises to the mitochondrion matrix. It catalyses the reaction (S)-malate + NAD(+) = oxaloacetate + NADH + H(+). The protein is Malate dehydrogenase, mitochondrial (MDH1) of Schizosaccharomyces pombe (strain 972 / ATCC 24843) (Fission yeast).